A 361-amino-acid chain; its full sequence is NADP-dependent alcohol dehydrogenase 7 (361 aa).

Residue C46 coordinates Zn(2+). The NADP(+) site is built by G47 and H51. H68, C100, C103, C106, C114, and C164 together coordinate Zn(2+). The NADP(+) site is built by I189, G191, I192, S211, R212, K216, C251, S253, S256, I276, S300, and I302. S316 is modified (phosphoserine). R349 is an NADP(+) binding site.

Belongs to the zinc-containing alcohol dehydrogenase family. Homodimer. It depends on Zn(2+) as a cofactor.

The enzyme catalyses a primary alcohol + NADP(+) = an aldehyde + NADPH + H(+). The catalysed reaction is (E)-cinnamyl alcohol + NADP(+) = (E)-cinnamaldehyde + NADPH + H(+). It carries out the reaction 3-methylbutanol + NADP(+) = 3-methylbutanal + NADPH + H(+). In terms of biological role, NADP-dependent alcohol dehydrogenase with a broad substrate specificity. The oxidative reactions are more than 100 times less efficient than the corresponding reductions, suggesting that the enzyme acts as an aldehyde reductase, rather than as an alcohol dehydrogenase. The chain is NADP-dependent alcohol dehydrogenase 7 (ADH7) from Saccharomyces cerevisiae (strain ATCC 204508 / S288c) (Baker's yeast).